Here is a 288-residue protein sequence, read N- to C-terminus: Phosphatidylserine decarboxylase proenzyme (288 aa).

Active-site charge relay system; for autoendoproteolytic cleavage activity residues include Asp89, His146, and Ser252. Ser252 (schiff-base intermediate with substrate; via pyruvic acid; for decarboxylase activity) is an active-site residue. Pyruvic acid (Ser); by autocatalysis is present on Ser252.

The protein belongs to the phosphatidylserine decarboxylase family. PSD-B subfamily. Prokaryotic type I sub-subfamily. As to quaternary structure, heterodimer of a large membrane-associated beta subunit and a small pyruvoyl-containing alpha subunit. Pyruvate serves as cofactor. Is synthesized initially as an inactive proenzyme. Formation of the active enzyme involves a self-maturation process in which the active site pyruvoyl group is generated from an internal serine residue via an autocatalytic post-translational modification. Two non-identical subunits are generated from the proenzyme in this reaction, and the pyruvate is formed at the N-terminus of the alpha chain, which is derived from the carboxyl end of the proenzyme. The autoendoproteolytic cleavage occurs by a canonical serine protease mechanism, in which the side chain hydroxyl group of the serine supplies its oxygen atom to form the C-terminus of the beta chain, while the remainder of the serine residue undergoes an oxidative deamination to produce ammonia and the pyruvoyl prosthetic group on the alpha chain. During this reaction, the Ser that is part of the protease active site of the proenzyme becomes the pyruvoyl prosthetic group, which constitutes an essential element of the active site of the mature decarboxylase.

The protein resides in the cell membrane. The catalysed reaction is a 1,2-diacyl-sn-glycero-3-phospho-L-serine + H(+) = a 1,2-diacyl-sn-glycero-3-phosphoethanolamine + CO2. It functions in the pathway phospholipid metabolism; phosphatidylethanolamine biosynthesis; phosphatidylethanolamine from CDP-diacylglycerol: step 2/2. Catalyzes the formation of phosphatidylethanolamine (PtdEtn) from phosphatidylserine (PtdSer). In Shewanella frigidimarina (strain NCIMB 400), this protein is Phosphatidylserine decarboxylase proenzyme.